The sequence spans 125 residues: L-fucose mutarotase (125 aa).

Residue His-13 is the Proton donor of the active site.

The protein belongs to the RbsD / FucU family. FucU mutarotase subfamily.

It catalyses the reaction alpha-L-fucose = beta-L-fucose. Its activity is regulated as follows. Active toward L-galactopyranoside and D-arabinopyranoside but no D-fucopyranoside activity detected. In terms of biological role, plays a role in the catabolism of L-fucose. Involved in the anomeric conversion of L-fucose. In Xanthomonas campestris pv. campestris (strain ATCC 33913 / DSM 3586 / NCPPB 528 / LMG 568 / P 25), this protein is L-fucose mutarotase.